Consider the following 598-residue polypeptide: Probable pectinesterase/pectinesterase inhibitor 34 (598 aa).

The disordered stretch occupies residues 1-40 (MGYERLGPSGATGSVTTSTTTAPILNQVSTSEQPENNNRR). A compositionally biased stretch (low complexity) spans 7 to 23 (GPSGATGSVTTSTTTAP). A compositionally biased stretch (polar residues) spans 24-36 (ILNQVSTSEQPEN). A helical membrane pass occupies residues 46-66 (VVSSIVLAISLILAAAIFAGV). A pectinesterase inhibitor 34 region spans residues 81-232 (RKPSQAISKA…SELVSNCLAI (152 aa)). The segment at 284 to 582 (DIIVSKDGNG…FTVAEFIYGS (299 aa)) is pectinesterase 34. 2 residues coordinate substrate: Thr360 and Gln390. Asp413 functions as the Proton donor; for pectinesterase activity in the catalytic mechanism. An intrachain disulfide couples Cys427 to Cys447. Asp434 serves as the catalytic Nucleophile; for pectinesterase activity. The substrate site is built by Arg502 and Trp504.

It in the N-terminal section; belongs to the PMEI family. The protein in the C-terminal section; belongs to the pectinesterase family. Expressed in siliques.

Its subcellular location is the membrane. It carries out the reaction [(1-&gt;4)-alpha-D-galacturonosyl methyl ester](n) + n H2O = [(1-&gt;4)-alpha-D-galacturonosyl](n) + n methanol + n H(+). It participates in glycan metabolism; pectin degradation; 2-dehydro-3-deoxy-D-gluconate from pectin: step 1/5. In terms of biological role, acts in the modification of cell walls via demethylesterification of cell wall pectin. The sequence is that of Probable pectinesterase/pectinesterase inhibitor 34 (PME34) from Arabidopsis thaliana (Mouse-ear cress).